We begin with the raw amino-acid sequence, 696 residues long: DNA-directed RNA polymerase subunit beta' (696 aa).

Residues C76, C78, C94, and C97 each coordinate Zn(2+). Positions 496, 498, and 500 each coordinate Mg(2+).

This sequence belongs to the RNA polymerase beta' chain family. RpoC1 subfamily. In terms of assembly, in plastids the minimal PEP RNA polymerase catalytic core is composed of four subunits: alpha, beta, beta', and beta''. When a (nuclear-encoded) sigma factor is associated with the core the holoenzyme is formed, which can initiate transcription. Requires Mg(2+) as cofactor. Zn(2+) is required as a cofactor.

Its subcellular location is the plastid. It is found in the chloroplast. The catalysed reaction is RNA(n) + a ribonucleoside 5'-triphosphate = RNA(n+1) + diphosphate. Its function is as follows. DNA-dependent RNA polymerase catalyzes the transcription of DNA into RNA using the four ribonucleoside triphosphates as substrates. This chain is DNA-directed RNA polymerase subunit beta', found in Guizotia abyssinica (Niger).